A 262-amino-acid polypeptide reads, in one-letter code: Cap-specific mRNA (nucleoside-2'-O-)-methyltransferase (262 aa).

The 193-residue stretch at 34-226 folds into the RrmJ-type SAM-dependent 2'-O-MTase domain; it reads TRRPRCWRKL…ERYLICFNKL (193 aa). Gly-67 and Asp-140 together coordinate S-adenosyl-L-methionine. Lys-180 (proton acceptor) is an active-site residue.

The catalysed reaction is a 5'-end (N(7)-methyl 5'-triphosphoguanosine)-ribonucleoside in mRNA + S-adenosyl-L-methionine = a 5'-end (N(7)-methyl 5'-triphosphoguanosine)-(2'-O-methyl-ribonucleoside) in mRNA + S-adenosyl-L-homocysteine + H(+). Its function is as follows. S-adenosyl-L-methionine-dependent methyltransferase that mediates mRNA cap 2'-O-ribose methylation to the 5'-cap structure of late viral transcripts. In Lepidoptera (butterflies and moths), this protein is Cap-specific mRNA (nucleoside-2'-O-)-methyltransferase.